Here is an 83-residue protein sequence, read N- to C-terminus: Small ribosomal subunit protein eS21 (83 aa).

Belongs to the eukaryotic ribosomal protein eS21 family. In terms of assembly, component of the 40S small ribosomal subunit. Interacts with sta.

The protein resides in the cytoplasm. Its subcellular location is the cytosol. It localises to the rough endoplasmic reticulum. Functionally, may be an associated component of the ribosome rather than a core structural subunit. May act as a translation initiation factor. Has a role in regulation of cell proliferation in the hematopoietic organs and the imaginal disks of larva. This is Small ribosomal subunit protein eS21 (RpS21) from Drosophila ananassae (Fruit fly).